A 1476-amino-acid chain; its full sequence is Cystic fibrosis transmembrane conductance regulator (1476 aa).

The Cytoplasmic segment spans residues 1-77 (MQKSPLEKAS…QLIHALRRCF (77 aa)). Residues 78–98 (VWRFVFYGVLLYLGEVTKAVQ) form a helical membrane-spanning segment. Residues 81-365 (FVFYGVLLYL…TAVQIWYDSL (285 aa)) form the ABC transmembrane type-1 1 domain. Over 99–122 (PVLLGRIIASYDPDNTEERSIAIY) the chain is Extracellular. Residues 123–146 (LGIGLCLLFIVRTLLLHPAIFGLH) traverse the membrane as a helical segment. The Cytoplasmic segment spans residues 147 to 195 (HIGMQMRIAMFSLIYKKTLKLSSRVLDKISIGQLISLLSNNLNKFDEGL). The helical transmembrane segment at 196–216 (ALAHFIWIAPLQVVLLMGLLW) threads the bilayer. The Extracellular segment spans residues 217-222 (DLLQFS). The chain crosses the membrane as a helical span at residues 223 to 243 (AFCGLGLLIVLVIFQAILGKM). At 244–298 (MVKYRDKRAAKINERLVITSEVIDNIYSVKAYCWESAMEKIIESLREEELKMTRR) the chain is on the cytoplasmic side. Residues 299–319 (SAYMRFFTSSAFFFSGFFVVF) traverse the membrane as a helical segment. Residues 320 to 339 (LSVLPYTVINGIVLRKIFTT) are Extracellular-facing. Residues 340–358 (ISFCIVLRMSVTRQFPTAV) form a helical membrane-spanning segment. Residues 359 to 853 (QIWYDSLGMI…YLRYFTLHRG (495 aa)) are Cytoplasmic-facing. Residues Trp-401, 458–465 (GSTGAGKT), and Gln-493 contribute to the ATP site. The 235-residue stretch at 412 to 646 (VQLNNDDRKT…RPDFSSKLMG (235 aa)) folds into the ABC transporter 1 domain. The S-palmitoyl cysteine moiety is linked to residue Cys-524. Residues Ser-549 and Ser-660 each carry the phosphoserine modification. Positions 654-826 (TEERRSSILT…EEINEEDLKE (173 aa)) are disordered R region. The residue at position 670 (Ser-670) is a Phosphoserine; by PKA. Phosphoserine occurs at positions 684, 698, and 710. Thr-715 is subject to Phosphothreonine. Phosphoserine occurs at positions 732, 763, 785, 790, and 808. The chain crosses the membrane as a helical span at residues 854–874 (LFAVLIWCVLVFLVEVAASLF). The region spanning 854–1153 (LFAVLIWCVL…SSIDTDSLMR (300 aa)) is the ABC transmembrane type-1 2 domain. Over 875–913 (VLWLLKNNPVNGGNNGTKIANTSYVVVITSSSFYYIFYI) the chain is Extracellular. N-linked (GlcNAc...) asparagine glycans are attached at residues Asn-889 and Asn-895. A discontinuously helical membrane pass occupies residues 914 to 934 (YVGVADTLLALSLFRGLPLVH). The Cytoplasmic portion of the chain corresponds to 935-985 (TLITASKILHRKMLHSILHAPMSTFNKLKAGGILNRFSKDIAILDDFLPLT). The helical transmembrane segment at 986 to 1006 (IFDFIQLLFIVVGAIIVVSAL) threads the bilayer. Over 1007–1008 (QP) the chain is Extracellular. A helical membrane pass occupies residues 1009-1029 (YIFLATVPGLAVFILLRAYFL). Residues 1030–1090 (HTSQQLKQLE…TANWFMYLAT (61 aa)) are Cytoplasmic-facing. The chain crosses the membrane as a helical span at residues 1091–1111 (LRWFQMRIDMIFVLFFIVVTF). Topologically, residues 1112–1125 (ISILTTGEGEGTTG) are extracellular. A helical transmembrane segment spans residues 1126 to 1146 (IILTLAMNIMSTLQWAVNSSI). The Cytoplasmic segment spans residues 1147–1476 (DTDSLMRSVS…TEEEVQETRL (330 aa)). An ABC transporter 2 domain is found at 1208 to 1439 (VKDLTVKYVD…KSVFQRALSS (232 aa)). ATP contacts are provided by residues Tyr-1215 and 1240–1247 (GRTGSGKS). Residues 1382–1476 (RVLRQAFAGC…TEEEVQETRL (95 aa)) are interaction with GORASP2. The S-palmitoyl cysteine moiety is linked to residue Cys-1391. Ser-1440 and Ser-1452 each carry phosphoserine. The segment covering 1445 to 1456 (LFHGRHSSKQKP) has biased composition (basic residues). A disordered region spans residues 1445 to 1476 (LFHGRHSSKQKPRTQITAVKEETEEEVQETRL). Residues 1466 to 1476 (ETEEEVQETRL) show a composition bias toward acidic residues. The short motif at 1474–1476 (TRL) is the PDZ-binding element.

It belongs to the ABC transporter superfamily. ABCC family. CFTR transporter (TC 3.A.1.202) subfamily. Monomer; does not require oligomerization for channel activity. May form oligomers in the membrane. Interacts with SLC4A7 through NHERF1. Interacts with SHANK2. Interacts with NHERF1 and MYO6. Interacts (via C-terminus) with GOPC (via PDZ domain); this promotes CFTR internalization and thereby decreases channel activity. Interacts with SLC4A7 through NHERF1. Found in a complex with MYO5B and RAB11A. Interacts with ANO1. Interacts with SLC26A8. Interacts with AHCYL1; the interaction increases CFTR activity. Interacts with CSE1L. The core-glycosylated form interacts with GORASP2 (via PDZ GRASP-type 1 domain) in respone to ER stress. Interacts with MARCHF2; the interaction leads to CFTR ubiqtuitination and degradation. Interacts with ADGRG2. Post-translationally, N-glycosylated. Phosphorylated; cAMP treatment promotes phosphorylation and activates the channel. Dephosphorylation decreases the ATPase activity (in vitro). Phosphorylation at PKA sites activates the channel. Phosphorylation at PKC sites enhances the response to phosphorylation by PKA. Phosphorylated by AMPK; this inhibits channel activity. In terms of processing, ubiquitinated, leading to its degradation in the lysosome. Deubiquitination by USP10 in early endosomes enhances its endocytic recycling to the cell membrane. Ubiquitinated by RNF185 during ER stress. Ubiquitinated by MARCHF2. In terms of tissue distribution, detected in epithelial cells in nasopharynx, submandibular gland, pancreas and ileum (at protein level). Expressed in the epididymis. In the caput section of the epididymis, expressed uniformly on both the luminal and basolateral sides of the ducts and on sperm in the caput lumen (at protein level). In the cauda, detected along the luminal border but not continuously and is also expressed on the basolateral surface. Within the caudal lumen, detected on sperm.

It localises to the apical cell membrane. Its subcellular location is the early endosome membrane. The protein resides in the cell membrane. The protein localises to the recycling endosome membrane. It is found in the endoplasmic reticulum membrane. It localises to the nucleus. It carries out the reaction ATP + H2O + closed Cl(-) channel = ADP + phosphate + open Cl(-) channel.. The enzyme catalyses chloride(in) = chloride(out). It catalyses the reaction hydrogencarbonate(in) = hydrogencarbonate(out). The catalysed reaction is ATP + H2O = ADP + phosphate + H(+). In terms of biological role, epithelial ion channel that plays an important role in the regulation of epithelial ion and water transport and fluid homeostasis. Mediates the transport of chloride ions across the cell membrane. Possesses an intrinsic ATPase activity and utilizes ATP to gate its channel; the passive flow of anions through the channel is gated by cycles of ATP binding and hydrolysis by the ATP-binding domains. The ion channel is also permeable to HCO(3)(-); selectivity depends on the extracellular chloride concentration. Exerts its function also by modulating the activity of other ion channels and transporters. Contributes to the regulation of the pH and the ion content of the epithelial fluid layer. Modulates the activity of the epithelial sodium channel (ENaC) complex, in part by regulating the cell surface expression of the ENaC complex. May regulate bicarbonate secretion and salvage in epithelial cells by regulating the transporter SLC4A7. Can inhibit the chloride channel activity of ANO1. Plays a role in the chloride and bicarbonate homeostasis during sperm epididymal maturation and capacitation. This chain is Cystic fibrosis transmembrane conductance regulator, found in Rattus norvegicus (Rat).